The primary structure comprises 84 residues: Small ribosomal subunit protein uS17c (84 aa).

This sequence belongs to the universal ribosomal protein uS17 family. As to quaternary structure, part of the 30S ribosomal subunit.

The protein localises to the plastid. Its subcellular location is the chloroplast. One of the primary rRNA binding proteins, it binds specifically to the 5'-end of 16S ribosomal RNA. The polypeptide is Small ribosomal subunit protein uS17c (rps17) (Trieres chinensis (Marine centric diatom)).